The chain runs to 443 residues: Thymidine phosphorylase (443 aa).

It belongs to the thymidine/pyrimidine-nucleoside phosphorylase family. In terms of assembly, homodimer.

The enzyme catalyses thymidine + phosphate = 2-deoxy-alpha-D-ribose 1-phosphate + thymine. Its pathway is pyrimidine metabolism; dTMP biosynthesis via salvage pathway; dTMP from thymine: step 1/2. In terms of biological role, the enzymes which catalyze the reversible phosphorolysis of pyrimidine nucleosides are involved in the degradation of these compounds and in their utilization as carbon and energy sources, or in the rescue of pyrimidine bases for nucleotide synthesis. This is Thymidine phosphorylase from Shewanella pealeana (strain ATCC 700345 / ANG-SQ1).